The chain runs to 125 residues: Small ribosomal subunit protein eS6 (125 aa).

Belongs to the eukaryotic ribosomal protein eS6 family. In terms of assembly, part of the 30S ribosomal subunit.

The protein is Small ribosomal subunit protein eS6 of Thermococcus kodakarensis (strain ATCC BAA-918 / JCM 12380 / KOD1) (Pyrococcus kodakaraensis (strain KOD1)).